A 208-amino-acid chain; its full sequence is Large ribosomal subunit protein uL4 (208 aa).

A disordered region spans residues 58-77; the sequence is RGGGRKPWRQKGTGRARQGS. A compositionally biased stretch (basic residues) spans 60–71; sequence GGRKPWRQKGTG.

It belongs to the universal ribosomal protein uL4 family. Part of the 50S ribosomal subunit.

In terms of biological role, one of the primary rRNA binding proteins, this protein initially binds near the 5'-end of the 23S rRNA. It is important during the early stages of 50S assembly. It makes multiple contacts with different domains of the 23S rRNA in the assembled 50S subunit and ribosome. Functionally, forms part of the polypeptide exit tunnel. This is Large ribosomal subunit protein uL4 from Caldicellulosiruptor bescii (strain ATCC BAA-1888 / DSM 6725 / KCTC 15123 / Z-1320) (Anaerocellum thermophilum).